The following is a 282-amino-acid chain: NAD(P)H-hydrate epimerase (282 aa).

A mitochondrion-targeting transit peptide spans 1-53 (MSGLRTLLGLGLLVAGSRLPRIASRQSVCRAGPIWWGTQHRSSETMASAAVKY). The YjeF N-terminal domain occupies 59-269 (AQAVDEELFN…ALEKKYQLNL (211 aa)). 113 to 117 (NNGGD) provides a ligand contact to (6S)-NADPHX. A K(+)-binding site is contributed by Asn114. An N6-succinyllysine modification is found at Lys138. K(+) is bound at residue Asp179. Residues 183–189 (GFSFKGD) and Asp212 contribute to the (6S)-NADPHX site. Ser215 contributes to the K(+) binding site.

Belongs to the NnrE/AIBP family. Homodimer. Interacts with APOA1 and APOA2. It depends on K(+) as a cofactor. In terms of processing, undergoes physiological phosphorylation during sperm capacitation, downstream to PKA activation.

It localises to the mitochondrion. Its subcellular location is the secreted. The catalysed reaction is (6R)-NADHX = (6S)-NADHX. The enzyme catalyses (6R)-NADPHX = (6S)-NADPHX. Catalyzes the epimerization of the S- and R-forms of NAD(P)HX, a damaged form of NAD(P)H that is a result of enzymatic or heat-dependent hydration. This is a prerequisite for the S-specific NAD(P)H-hydrate dehydratase to allow the repair of both epimers of NAD(P)HX. Accelerates cholesterol efflux from endothelial cells to high-density lipoprotein (HDL) and thereby regulates angiogenesis. The sequence is that of NAD(P)H-hydrate epimerase from Rattus norvegicus (Rat).